The following is a 425-amino-acid chain: MSLSEYLREFAEIFEEAAQELTSIFELPPDLLKDITEEDVGTDDSCNKKFLEVQKQKEDEEDEEILKGVDLTQQDSVREKIHEIQSMSQLSEKRKALLMQKMLMSGYLKYRRTHKKESDENQLSSSDLEKTYYDKEQEILGCSHYMRNCKVQCFDCHEWYTCRHCHNDACDHVLERPAVENMLCMICSKVQPAAQYCKYCKNCMGRYYCNKCKLWDDDPNKSSYHCDDCGICRIGRGLGDDYFHCKTCGLCLPISVFNTHRCIERSTDCNCPICGEYMFNSRERVIFLSCSHPLHQRCHEEYIRTNYRCPTCYKTIINVNSLFRILDMEIERQPMPYPYNTWISTIRCNDCNSRCDTKYHFLGHKCNSCHSYNTCISSIYKPLDHPQVSIPRLATAEDAGMRRLMGHSWDNSDEDFNIFGIHSFI.

Residues 135-202 form a CHY-type zinc finger; sequence KEQEILGCSH…AAQYCKYCKN (68 aa). Zn(2+)-binding residues include Cys142, His144, Cys153, Cys156, Cys162, Cys165, His166, His172, Cys184, Cys187, Cys197, Cys200, Cys209, Cys212, His225, Cys226, Cys229, Cys232, His244, Cys245, Cys248, Cys251, His260, and Cys262. The CTCHY-type zinc finger occupies 204-270; it reads MGRYYCNKCK…RCIERSTDCN (67 aa). The RING-type; atypical zinc-finger motif lies at 271 to 313; the sequence is CPICGEYMFNSRERVIFLSCSHPLHQRCHEEYIRTNYRCPTCY.

This is an uncharacterized protein from Schizosaccharomyces pombe (strain 972 / ATCC 24843) (Fission yeast).